The following is a 254-amino-acid chain: L-rhamnose 1-dehydrogenase (NAD(P)(+)) (254 aa).

Residues glycine 13, serine 15, isoleucine 18, aspartate 64, valine 65, and asparagine 91 each contribute to the NADP(+) site. Serine 144 acts as the Proton donor in catalysis. Beta-L-rhamnose is bound by residues serine 144, serine 146, glutamine 154, and tyrosine 157. 2 residues coordinate NADP(+): tyrosine 157 and lysine 161. Tyrosine 157 acts as the Proton acceptor in catalysis. The Lowers pKa of active site Tyr role is filled by lysine 161. Threonine 189 lines the beta-L-rhamnose pocket. Residue isoleucine 190 coordinates NADP(+). Asparagine 195 contributes to the beta-L-rhamnose binding site.

This sequence belongs to the short-chain dehydrogenases/reductases (SDR) family.

It carries out the reaction L-rhamnofuranose + NAD(+) = L-rhamnono-1,4-lactone + NADH + H(+). The enzyme catalyses L-rhamnofuranose + NADP(+) = L-rhamnono-1,4-lactone + NADPH + H(+). It participates in carbohydrate degradation; L-rhamnose degradation. Its function is as follows. NAD(P)-dependent dehydrogenase that catalyzes the oxidation of L-rhamnose to L-rhamnono-1,4-lactone. Also shows high activity with L-lyxose and low activity with L-mannose. Can utilize either NAD(+) or NADP(+), with a slight preference for NADP(+). Catalyzes the first step in an alternative pathway for rhamnose utilization that does not involve phosphorylated intermediates. The sequence is that of L-rhamnose 1-dehydrogenase (NAD(P)(+)) from Sphingomonas sp. (strain SKA58).